A 157-amino-acid chain; its full sequence is MSYTVSSANQLVYLGSVWADPLELQNLCTSALGNQFQTQQARTTVQQQFSDVWKTIPTATVRFPATGFKVFRYNAVLDSLVSALLGAFDTRNRIIEVENPQNPTTAETLDATRRVDDATVAIRASISNLMNELVRGTGMYNQALFESASGLTWATTP.

N-acetylserine; by host is present on Ser2.

It belongs to the virgaviridae capsid protein family.

It localises to the virion. In terms of biological role, capsid protein self-assembles to form rod-shaped virions about 18 nm in diameter with a central canal enclosing the viral genomic RNA. The protein is Capsid protein (CP) of Tomato mosaic virus (strain Korean) (ToMV).